The following is a 429-amino-acid chain: Adenylosuccinate synthetase (429 aa).

GTP contacts are provided by residues 12 to 18 (GDEGKGK) and 40 to 42 (GHT). The active-site Proton acceptor is the Asp-13. Mg(2+) is bound by residues Asp-13 and Gly-40. IMP-binding positions include 13-16 (DEGK), 38-41 (NAGH), Thr-129, Arg-143, Gln-223, Thr-238, and Arg-302. His-41 functions as the Proton donor in the catalytic mechanism. 298–304 (VVTGRKR) lines the substrate pocket. GTP contacts are provided by residues Arg-304, 330-332 (KLD), and 412-414 (STS).

Belongs to the adenylosuccinate synthetase family. Homodimer. It depends on Mg(2+) as a cofactor.

It localises to the cytoplasm. The catalysed reaction is IMP + L-aspartate + GTP = N(6)-(1,2-dicarboxyethyl)-AMP + GDP + phosphate + 2 H(+). It functions in the pathway purine metabolism; AMP biosynthesis via de novo pathway; AMP from IMP: step 1/2. Functionally, plays an important role in the de novo pathway of purine nucleotide biosynthesis. Catalyzes the first committed step in the biosynthesis of AMP from IMP. The polypeptide is Adenylosuccinate synthetase (Bartonella henselae (strain ATCC 49882 / DSM 28221 / CCUG 30454 / Houston 1) (Rochalimaea henselae)).